Here is a 240-residue protein sequence, read N- to C-terminus: Probable ATP synthase 24 kDa subunit, mitochondrial (240 aa).

The N-terminal 32 residues, 1–32 (MAYASRFLSRSKQLQGGLVILQQQHAIPVRAF), are a transit peptide targeting the mitochondrion. Basic and acidic residues-rich tracts occupy residues 210–222 (AVEA…KKEE) and 229–240 (PDVKSLDIRNFI). The segment at 210 to 240 (AVEAMESQKKKEEFQDEEMPDVKSLDIRNFI) is disordered.

The protein resides in the mitochondrion. The protein localises to the mitochondrion inner membrane. Its function is as follows. Mitochondrial membrane ATP synthase (F(1)F(0) ATP synthase or Complex V) produces ATP from ADP in the presence of a proton gradient across the membrane which is generated by electron transport complexes of the respiratory chain. F-type ATPases consist of two structural domains, F(1) - containing the extramembraneous catalytic core and F(0) - containing the membrane proton channel, linked together by a central stalk and a peripheral stalk. During catalysis, ATP synthesis in the catalytic domain of F(1) is coupled via a rotary mechanism of the central stalk subunits to proton translocation. Part of the complex F(0) domain. The protein is Probable ATP synthase 24 kDa subunit, mitochondrial of Arabidopsis thaliana (Mouse-ear cress).